Here is a 120-residue protein sequence, read N- to C-terminus: MALNIEEIIASVKEASVLELNDLVKAIEEEFGVTAAAPVAVAAAGGGAAEQTEFTVELSSAGDSKIKVIKVVREITGLGLKEAKELVDNAPKALKEGVAKEEAEEIKAKLEEVGANVEVK.

This sequence belongs to the bacterial ribosomal protein bL12 family. In terms of assembly, homodimer. Part of the ribosomal stalk of the 50S ribosomal subunit. Forms a multimeric L10(L12)X complex, where L10 forms an elongated spine to which 2 to 4 L12 dimers bind in a sequential fashion. Binds GTP-bound translation factors.

Functionally, forms part of the ribosomal stalk which helps the ribosome interact with GTP-bound translation factors. Is thus essential for accurate translation. The chain is Large ribosomal subunit protein bL12 from Listeria welshimeri serovar 6b (strain ATCC 35897 / DSM 20650 / CCUG 15529 / CIP 8149 / NCTC 11857 / SLCC 5334 / V8).